The sequence spans 143 residues: Large ribosomal subunit protein uL11 (143 aa).

This sequence belongs to the universal ribosomal protein uL11 family. Part of the ribosomal stalk of the 50S ribosomal subunit. Interacts with L10 and the large rRNA to form the base of the stalk. L10 forms an elongated spine to which L12 dimers bind in a sequential fashion forming a multimeric L10(L12)X complex. In terms of processing, one or more lysine residues are methylated.

In terms of biological role, forms part of the ribosomal stalk which helps the ribosome interact with GTP-bound translation factors. The chain is Large ribosomal subunit protein uL11 from Ectopseudomonas mendocina (strain ymp) (Pseudomonas mendocina).